Reading from the N-terminus, the 585-residue chain is Mitochondrial translation ATP-dependent RNA helicase mrh5 (585 aa).

A Q motif motif is present at residues 87 to 117; the sequence is PKFHELPLNQNILDGLSTNFAEYKNSTPLQQ. Residues 121-351 form the Helicase ATP-binding domain; the sequence is NALMKSGVSF…SRYITDQLGI (231 aa). Position 134–141 (134–141) interacts with ATP; sequence GWNGSGKS. Positions 261–264 match the DEAD box motif; that stretch reads DESD. Residues 390–584 form the Helicase C-terminal domain; the sequence is NLPYEFVRFN…PKSYEFDDEH (195 aa).

Belongs to the DEAD box helicase family. In terms of assembly, component of the MRH5C complex, composed of mrh5, ppr4, mtf2, and sls1. Proteins mtf2 and sls1 form a subcomplex that serves as a scaffold to bring mrh5 and ppr4 together. The MRH5C complex associates with the small subunit of the mitochondrial ribosome.

The protein resides in the mitochondrion. The catalysed reaction is ATP + H2O = ADP + phosphate + H(+). Its function is as follows. Translation activation factor that as part of the MRH5C complex specifically recruits cox1 mRNA to the mitochondrial ribosome for translation initiation. This chain is Mitochondrial translation ATP-dependent RNA helicase mrh5, found in Schizosaccharomyces pombe (strain 972 / ATCC 24843) (Fission yeast).